Here is a 327-residue protein sequence, read N- to C-terminus: MVVELKNIEKIYENGFHALKGVNLELKKGDILGVIGYSGAGKSTLIRLINCLERPSSGEVLVNGVNLLNLKPKELQKARQKIGMIFQHFNLLSAKNVFENVAFALEIARWEKTKIKSRVHELLELVGLEDKVHFYPKQLSGGQKQRVAIARSLANCPNLLLCDEATSALDSKTTHSILTLLSGIQKKFDLSIVFITHQIEVVKELCNQMCVISSGEIVERGSVEEIFANPKHAVTKELLGIKNEHADQKSQDIYRIVFLGEHLDEPIISNLIRRFKIDVSIISGNIEELTTKDIGYLVVRFLGSVAEIQRALEYLNALGLQVEKLKD.

Residues 3–239 form the ABC transporter domain; that stretch reads VELKNIEKIY…PKHAVTKELL (237 aa). 36–43 is a binding site for ATP; that stretch reads GYSGAGKS.

It belongs to the ABC transporter superfamily. Methionine importer (TC 3.A.1.24) family. The complex is composed of two ATP-binding proteins (MetN), two transmembrane proteins (MetI) and a solute-binding protein (MetQ).

The protein resides in the cell inner membrane. It catalyses the reaction L-methionine(out) + ATP + H2O = L-methionine(in) + ADP + phosphate + H(+). The catalysed reaction is D-methionine(out) + ATP + H2O = D-methionine(in) + ADP + phosphate + H(+). Its function is as follows. Part of the ABC transporter complex MetNIQ involved in methionine import. Responsible for energy coupling to the transport system. In Helicobacter pylori (strain J99 / ATCC 700824) (Campylobacter pylori J99), this protein is Methionine import ATP-binding protein MetN.